A 297-amino-acid polypeptide reads, in one-letter code: Bifunctional protein FolD (297 aa).

NADP(+)-binding positions include 168 to 170, Thr-195, and Val-236; that span reads GRG.

This sequence belongs to the tetrahydrofolate dehydrogenase/cyclohydrolase family. Homodimer.

It catalyses the reaction (6R)-5,10-methylene-5,6,7,8-tetrahydrofolate + NADP(+) = (6R)-5,10-methenyltetrahydrofolate + NADPH. The catalysed reaction is (6R)-5,10-methenyltetrahydrofolate + H2O = (6R)-10-formyltetrahydrofolate + H(+). It participates in one-carbon metabolism; tetrahydrofolate interconversion. Its function is as follows. Catalyzes the oxidation of 5,10-methylenetetrahydrofolate to 5,10-methenyltetrahydrofolate and then the hydrolysis of 5,10-methenyltetrahydrofolate to 10-formyltetrahydrofolate. The polypeptide is Bifunctional protein FolD (Bifidobacterium animalis subsp. lactis (strain AD011)).